A 318-amino-acid polypeptide reads, in one-letter code: Geranylfarnesyl diphosphate synthase (318 aa).

Positions 31, 34, and 65 each coordinate isopentenyl diphosphate. Mg(2+) is bound by residues Asp-72 and Asp-76. Arg-81 is a binding site for an all-trans-polyprenyl diphosphate. Position 82 (Arg-82) interacts with isopentenyl diphosphate. 3 residues coordinate an all-trans-polyprenyl diphosphate: Lys-166, Thr-167, and Gln-204.

Belongs to the FPP/GGPP synthase family. As to quaternary structure, homodimer. Requires Mg(2+) as cofactor.

It carries out the reaction isopentenyl diphosphate + (2E,6E,10E)-geranylgeranyl diphosphate = (2E,6E,10E,14E)-geranylfarnesyl diphosphate + diphosphate. Its function is as follows. Probably involved in biosynthesis of the precursor for C25 (sesterterpanyl chain) moiety of C25-C25 diether (2,3-di-O-sesterterpanyl-sn-glycero) membrane lipid. Catalyzes the condensation of isopentenyl pyrophosphate with the allylic pyrophosphates to yield all-trans geranylfarnesyl diphosphate (GFPP). Geranylgeranyl diphosphate (GGPP) is the preferred substrate, however methylallyl diphosphate (DMAPP), farnesyl diphosphate (FPP) and geranyl diphosphate (GPP) can also be used as allylic substrate. This chain is Geranylfarnesyl diphosphate synthase (fgs), found in Aeropyrum pernix.